Consider the following 500-residue polypeptide: MASSPNAPGSHSHTSISTVNPPPPAHTNQGLEIPLETLVSHLLASKRSLSSISTVWRANEIVTSAKNALEESAILQAKTRFLQSGINEQMKTLLKVRKTVEFVYNDGQEDFSNVLHNLDAADARLESTMNMLRSTMVDAAFRPAGEEPRNLLDFVDEQGVEKMRDGLKELIDESKEAEAAFGTSILSFDSDIRSLKSGFKNSKRKTSSYSPIPNHLYTLEGHAQEMASLLSSLSSHFDLCLNAIRHTEGGYAAVRNAASNPPPGAEPVSVSGVMSNSHDDINEAPLTEHEREEMFSILEKDAAEVEDVVMELHDRQNEMEAKHDAILDHVSHLAEQFRHTASVYKTLEGVYQRLPRYILAGHDFRARWEDTKVHINEQMNELEGMRLFYENYLSSYDGLILEVHRRTVAEEKARSIAKKAMEQINKIYDIDVKERNDFKFDVGDYLPVDLYPGISEAPPKWDFRLVEDEEGGSSTPLLERSVVKESFKRDRERHRNSKDN.

The span at 1–19 (MASSPNAPGSHSHTSISTV) shows a compositional bias: polar residues. The tract at residues 1 to 30 (MASSPNAPGSHSHTSISTVNPPPPAHTNQG) is disordered. Coiled-coil stretches lie at residues 157-181 (EQGV…EAAF) and 292-322 (EEMF…MEAK). Positions 470 to 500 (EGGSSTPLLERSVVKESFKRDRERHRNSKDN) are disordered. Residues 481–490 (SVVKESFKRD) are compositionally biased toward basic and acidic residues. Basic residues predominate over residues 491-500 (RERHRNSKDN).

This sequence belongs to the ATG17 family.

Its subcellular location is the cytoplasm. The protein localises to the preautophagosomal structure membrane. Autophagy-specific protein that functions in response to autophagy-inducing signals as a scaffold to recruit other ATG proteins to organize pre-autophagosomal structure (PAS) formation. Modulates the timing and magnitude of the autophagy response, such as the size of the sequestering vesicles. Plays particularly a role in pexophagy and nucleophagy. This Botryotinia fuckeliana (strain B05.10) (Noble rot fungus) protein is Autophagy-related protein 17 (atg17).